The sequence spans 258 residues: UPF0246 protein NTHI1156 (258 aa).

The protein belongs to the UPF0246 family.

The polypeptide is UPF0246 protein NTHI1156 (Haemophilus influenzae (strain 86-028NP)).